The chain runs to 196 residues: NADH-quinone oxidoreductase subunit B (196 aa).

Residues cysteine 75, cysteine 76, cysteine 140, and cysteine 170 each contribute to the [4Fe-4S] cluster site.

The protein belongs to the complex I 20 kDa subunit family. NDH-1 is composed of 14 different subunits. Subunits NuoB, C, D, E, F, and G constitute the peripheral sector of the complex. The cofactor is [4Fe-4S] cluster.

The protein resides in the cell inner membrane. The enzyme catalyses a quinone + NADH + 5 H(+)(in) = a quinol + NAD(+) + 4 H(+)(out). Functionally, NDH-1 shuttles electrons from NADH, via FMN and iron-sulfur (Fe-S) centers, to quinones in the respiratory chain. Couples the redox reaction to proton translocation (for every two electrons transferred, four hydrogen ions are translocated across the cytoplasmic membrane), and thus conserves the redox energy in a proton gradient. The chain is NADH-quinone oxidoreductase subunit B from Caulobacter sp. (strain K31).